Reading from the N-terminus, the 194-residue chain is Holliday junction branch migration complex subunit RuvA (194 aa).

Residues 1–63 are domain I; the sequence is MFEYLYGTVE…EDTYKLIGFL (63 aa). Positions 64–142 are domain II; the sequence is DERDRKIFEL…NLTYTEEETV (79 aa). Residues 143 to 147 form a flexible linker region; that stretch reads SMDML. A domain III region spans residues 147-194; it reads LEDLVLALEGLGYNKKEIDKTLEKIDLNKFSSLEDAIKGILKNMRIGD.

This sequence belongs to the RuvA family. In terms of assembly, homotetramer. Forms an RuvA(8)-RuvB(12)-Holliday junction (HJ) complex. HJ DNA is sandwiched between 2 RuvA tetramers; dsDNA enters through RuvA and exits via RuvB. An RuvB hexamer assembles on each DNA strand where it exits the tetramer. Each RuvB hexamer is contacted by two RuvA subunits (via domain III) on 2 adjacent RuvB subunits; this complex drives branch migration. In the full resolvosome a probable DNA-RuvA(4)-RuvB(12)-RuvC(2) complex forms which resolves the HJ.

Its subcellular location is the cytoplasm. In terms of biological role, the RuvA-RuvB-RuvC complex processes Holliday junction (HJ) DNA during genetic recombination and DNA repair, while the RuvA-RuvB complex plays an important role in the rescue of blocked DNA replication forks via replication fork reversal (RFR). RuvA specifically binds to HJ cruciform DNA, conferring on it an open structure. The RuvB hexamer acts as an ATP-dependent pump, pulling dsDNA into and through the RuvAB complex. HJ branch migration allows RuvC to scan DNA until it finds its consensus sequence, where it cleaves and resolves the cruciform DNA. The polypeptide is Holliday junction branch migration complex subunit RuvA (Fusobacterium nucleatum subsp. nucleatum (strain ATCC 25586 / DSM 15643 / BCRC 10681 / CIP 101130 / JCM 8532 / KCTC 2640 / LMG 13131 / VPI 4355)).